Reading from the N-terminus, the 175-residue chain is DELTA-stichotoxin-Hcr4a (175 aa).

The tract at residues 1–10 (ALAGAIIAGA) is plays an important role in the hemolytic activity. An N-terminal region region spans residues 9 to 28 (GASLTFQILDKVLAELGQVS). Phosphocholine-binding residues include S52, V85, S103, P105, Y131, Y135, and Y136. The segment at 103-118 (SVPFDYNLYSNWWDVK) is trp-rich region, which is important for the binding to lipid membrane.

Belongs to the actinoporin family. Sea anemone subfamily. Octamer or nonamer in membranes. Monomer in the soluble state.

It localises to the secreted. The protein resides in the nematocyst. It is found in the target cell membrane. Its function is as follows. Pore-forming protein that forms cations-selective hydrophilic pores of around 1 nm and causes cardiac stimulation and cytolysis. Pore formation is a multi-step process that involves specific recognition of membrane sphingomyelin (but neither cholesterol nor phosphatidylcholine) using aromatic rich region and adjacent phosphocholine (POC) binding site, firm binding to the membrane (mainly driven by hydrophobic interactions) accompanied by the transfer of the N-terminal region to the lipid-water interface and finally pore formation after oligomerization of monomers. The sequence is that of DELTA-stichotoxin-Hcr4a from Radianthus crispa (Leathery sea anemone).